The primary structure comprises 88 residues: Cytochrome c oxidase subunit 6B2 (88 aa).

The segment at 1 to 21 (MLGVQAQMPAPGQWTTPPFDP) is disordered. A CHCH domain is found at 29–75 (TRNCYQNFLDYHRCVKTMDRRGKNTQACDYYFRVFHSLCPVSWVQRW). Positions 32-42 (CYQNFLDYHRC) match the Cx9C motif motif. 2 disulfide bridges follow: Cys32/Cys67 and Cys42/Cys56. Positions 56-67 (CDYYFRVFHSLC) match the Cx10C motif motif.

Belongs to the cytochrome c oxidase subunit 6B family. As to quaternary structure, component of the cytochrome c oxidase (complex IV, CIV), a multisubunit enzyme composed of 14 subunits. The complex is composed of a catalytic core of 3 subunits MT-CO1, MT-CO2 and MT-CO3, encoded in the mitochondrial DNA, and 11 supernumerary subunits COX4I, COX5A, COX5B, COX6A, COX6B, COX6C, COX7A, COX7B, COX7C, COX8 and NDUFA4, which are encoded in the nuclear genome. The complex exists as a monomer or a dimer and forms supercomplexes (SCs) in the inner mitochondrial membrane with NADH-ubiquinone oxidoreductase (complex I, CI) and ubiquinol-cytochrome c oxidoreductase (cytochrome b-c1 complex, complex III, CIII), resulting in different assemblies (supercomplex SCI(1)III(2)IV(1) and megacomplex MCI(2)III(2)IV(2)). As to expression, testis specific.

The protein localises to the mitochondrion inner membrane. Its pathway is energy metabolism; oxidative phosphorylation. Functionally, component of the cytochrome c oxidase, the last enzyme in the mitochondrial electron transport chain which drives oxidative phosphorylation. The respiratory chain contains 3 multisubunit complexes succinate dehydrogenase (complex II, CII), ubiquinol-cytochrome c oxidoreductase (cytochrome b-c1 complex, complex III, CIII) and cytochrome c oxidase (complex IV, CIV), that cooperate to transfer electrons derived from NADH and succinate to molecular oxygen, creating an electrochemical gradient over the inner membrane that drives transmembrane transport and the ATP synthase. Cytochrome c oxidase is the component of the respiratory chain that catalyzes the reduction of oxygen to water. Electrons originating from reduced cytochrome c in the intermembrane space (IMS) are transferred via the dinuclear copper A center (CU(A)) of subunit 2 and heme A of subunit 1 to the active site in subunit 1, a binuclear center (BNC) formed by heme A3 and copper B (CU(B)). The BNC reduces molecular oxygen to 2 water molecules using 4 electrons from cytochrome c in the IMS and 4 protons from the mitochondrial matrix. This is Cytochrome c oxidase subunit 6B2 (Cox6b2) from Rattus norvegicus (Rat).